Consider the following 166-residue polypeptide: Regulatory protein RecX (166 aa).

It belongs to the RecX family.

The protein localises to the cytoplasm. Functionally, modulates RecA activity. This chain is Regulatory protein RecX, found in Shigella boydii serotype 4 (strain Sb227).